The sequence spans 381 residues: NF-kappa-B inhibitor-like protein 1 (381 aa).

A disordered region spans residues 1-34 (MSNPSPQAPEEEASTSVCRPQSCSMASASRRHRR). Residues 14–27 (STSVCRPQSCSMAS) are compositionally biased toward polar residues. 2 ANK repeats span residues 64–93 (AGQPPPLHRACARHDAPALCLLLRLGADPA) and 97–134 (RHGDTALHAAARQGPDAYTDFFLPLLSRCPSAMGIKNK). 2 disordered regions span residues 132 to 167 (KNKDGETPGQILGWGPPWDSAEEEEDEEVSKEREWR) and 186 to 298 (EDDA…WRFG). Serine 151 carries the post-translational modification Phosphoserine. Acidic residues predominate over residues 151–160 (SAEEEEDEEV). 2 stretches are compositionally biased toward basic and acidic residues: residues 205-218 (RLAREHAQKQRQQL) and 237-290 (RQHE…RGAE).

In terms of assembly, interacts with CACTIN (via N-terminal domain); the interaction occurs in a pro-inflammatory-independent manner. In terms of tissue distribution, high expression found in heart muscle, liver, kidney and skin. Not detected in spleen, lung and brain.

The protein resides in the nucleus. Involved in the regulation of innate immune response. Acts as negative regulator of Toll-like receptor and interferon-regulatory factor (IRF) signaling pathways. Contributes to the negative regulation of transcriptional activation of NF-kappa-B target genes in response to endogenous pro-inflammatory stimuli. This chain is NF-kappa-B inhibitor-like protein 1 (Nfkbil1), found in Mus musculus (Mouse).